Here is a 287-residue protein sequence, read N- to C-terminus: MANLKSIKKRIVSVKNTRQITKAMKMVSAAKLRRAQENVVAARPYAGKLAEVLERLAKTQESDASPLMVKRDTRRALLVVVTSDRGLCGGFNANLSKAAERFINERKGEFSELSLMTIGRKGYEFLRNRHTVRKHHGNIFSTLSYQTAALIAAELVEGYLAEDYDEVYVIYNAFKSVMTQDITLEQLLPVTPKAGDDDEVGTEYIYEPSKAALLDELLPKHIEVQVFKSLLESVASEHGARMTAMDSASKNATEMIGKLTLIYNRARQAAITTELMEIISGSESIKG.

The protein belongs to the ATPase gamma chain family. As to quaternary structure, F-type ATPases have 2 components, CF(1) - the catalytic core - and CF(0) - the membrane proton channel. CF(1) has five subunits: alpha(3), beta(3), gamma(1), delta(1), epsilon(1). CF(0) has three main subunits: a, b and c.

The protein localises to the cell inner membrane. Its function is as follows. Produces ATP from ADP in the presence of a proton gradient across the membrane. The gamma chain is believed to be important in regulating ATPase activity and the flow of protons through the CF(0) complex. The chain is ATP synthase gamma chain from Geobacter sp. (strain M21).